A 111-amino-acid chain; its full sequence is Large ribosomal subunit protein uL22 (111 aa).

Belongs to the universal ribosomal protein uL22 family. In terms of assembly, part of the 50S ribosomal subunit.

This protein binds specifically to 23S rRNA; its binding is stimulated by other ribosomal proteins, e.g. L4, L17, and L20. It is important during the early stages of 50S assembly. It makes multiple contacts with different domains of the 23S rRNA in the assembled 50S subunit and ribosome. In terms of biological role, the globular domain of the protein is located near the polypeptide exit tunnel on the outside of the subunit, while an extended beta-hairpin is found that lines the wall of the exit tunnel in the center of the 70S ribosome. The protein is Large ribosomal subunit protein uL22 of Mycoplasma mycoides subsp. mycoides SC (strain CCUG 32753 / NCTC 10114 / PG1).